We begin with the raw amino-acid sequence, 510 residues long: Flavonoid 3',5'-hydroxylase (510 aa).

Cys-447 contributes to the heme binding site.

The protein belongs to the cytochrome P450 family. Heme serves as cofactor.

It carries out the reaction a 3',5'-unsubstituted flavanone + 2 reduced [NADPH--hemoprotein reductase] + 2 O2 = a 3',5'-dihydroxyflavanone + 2 oxidized [NADPH--hemoprotein reductase] + 2 H2O + 2 H(+). It participates in pigment biosynthesis; anthocyanin biosynthesis. Functionally, catalyzes the 3'5'-hydroxylation of naringenin and eriodictyol to form 5,7,3,'4',5'-pentahydroxyflavanone and 3',5'-hydroxylation of dihydrokaempferol and dihydroquercetin to form dihydromyricetin. This Eustoma exaltatum subsp. russellianum (Bluebells) protein is Flavonoid 3',5'-hydroxylase (CYP75A5).